A 256-amino-acid polypeptide reads, in one-letter code: D-aminoacyl-tRNA deacylase (256 aa).

The protein belongs to the DtdA deacylase family. In terms of assembly, monomer. It depends on Zn(2+) as a cofactor.

It carries out the reaction a D-aminoacyl-tRNA + H2O = a tRNA + a D-alpha-amino acid + H(+). It catalyses the reaction glycyl-tRNA(Ala) + H2O = tRNA(Ala) + glycine + H(+). D-aminoacyl-tRNA deacylase with broad substrate specificity. By recycling D-aminoacyl-tRNA to D-amino acids and free tRNA molecules, this enzyme counteracts the toxicity associated with the formation of D-aminoacyl-tRNA entities in vivo. This chain is D-aminoacyl-tRNA deacylase, found in Thermoplasma acidophilum (strain ATCC 25905 / DSM 1728 / JCM 9062 / NBRC 15155 / AMRC-C165).